Here is a 430-residue protein sequence, read N- to C-terminus: Trigger factor (430 aa).

In terms of domain architecture, PPIase FKBP-type spans 163–248 (GNIAIIDFKG…VKEIKVKEIP (86 aa)).

It belongs to the FKBP-type PPIase family. Tig subfamily.

The protein localises to the cytoplasm. It catalyses the reaction [protein]-peptidylproline (omega=180) = [protein]-peptidylproline (omega=0). In terms of biological role, involved in protein export. Acts as a chaperone by maintaining the newly synthesized protein in an open conformation. Functions as a peptidyl-prolyl cis-trans isomerase. The polypeptide is Trigger factor (Clostridium kluyveri (strain NBRC 12016)).